The sequence spans 213 residues: MKAFTKITAIVAPLDRSNVDTDAIIPKQFLKSIKRSGFGPNAFDEWRYLDHGEPGMDNSKRPLNPDFSLNQPRYQGAQILLTRKNFGCGSSREHAPWALDDYGFRAVIAPSFADIFFNNCYKNGLLPIVLTEERVDRLFKEVEANEGYQLSIDLAEQTLTTPSGETFTFDITEHRKHCLLNGLDEIGLTLQHADEIHAFEEKRRQSQPWLFNG.

This sequence belongs to the LeuD family. LeuD type 1 subfamily. Heterodimer of LeuC and LeuD.

It carries out the reaction (2R,3S)-3-isopropylmalate = (2S)-2-isopropylmalate. It participates in amino-acid biosynthesis; L-leucine biosynthesis; L-leucine from 3-methyl-2-oxobutanoate: step 2/4. Functionally, catalyzes the isomerization between 2-isopropylmalate and 3-isopropylmalate, via the formation of 2-isopropylmaleate. This Neisseria meningitidis serogroup B (strain ATCC BAA-335 / MC58) protein is 3-isopropylmalate dehydratase small subunit.